Reading from the N-terminus, the 220-residue chain is Ribosome maturation factor RimP (220 aa).

The segment covering 1-15 has biased composition (low complexity); it reads MSQRGRATRPTGPTG. 2 disordered regions span residues 1-35 and 184-220; these read MSQR…GGDL and PGRV…GEER. A compositionally biased stretch (acidic residues) spans 198–220; sequence DGADGADEAGDFDDDDDVEGEER.

It belongs to the RimP family.

The protein localises to the cytoplasm. In terms of biological role, required for maturation of 30S ribosomal subunits. In Salinispora tropica (strain ATCC BAA-916 / DSM 44818 / JCM 13857 / NBRC 105044 / CNB-440), this protein is Ribosome maturation factor RimP.